Reading from the N-terminus, the 280-residue chain is 4-deoxy-L-threo-5-hexosulose-uronate ketol-isomerase 1 (280 aa).

The Zn(2+) site is built by His198, His200, Glu205, and His247.

The protein belongs to the KduI family. Zn(2+) serves as cofactor.

It catalyses the reaction 5-dehydro-4-deoxy-D-glucuronate = 3-deoxy-D-glycero-2,5-hexodiulosonate. The protein operates within glycan metabolism; pectin degradation; 2-dehydro-3-deoxy-D-gluconate from pectin: step 4/5. In terms of biological role, catalyzes the isomerization of 5-dehydro-4-deoxy-D-glucuronate to 3-deoxy-D-glycero-2,5-hexodiulosonate. This chain is 4-deoxy-L-threo-5-hexosulose-uronate ketol-isomerase 1 (kduI1), found in Rhizobium meliloti (strain 1021) (Ensifer meliloti).